The primary structure comprises 538 residues: BTB/POZ domain-containing protein 6 (538 aa).

Residues 1-17 form the signal peptide; that stretch reads MLLPLACLHGRVAQCLT. Disordered regions lie at residues 29-53 and 76-115; these read PRRG…PPAK and AAVG…SPGW. The segment covering 35–53 has biased composition (low complexity); that stretch reads ARGAASTGAEAAPAAPPAK. Pro residues predominate over residues 85–103; that stretch reads RSPPSAPAPAPPPPAPAPP. The 71-residue stretch at 136-206 folds into the BTB domain; it reads ADVHFVVGPP…MYSDEIDLEA (71 aa).

As to expression, expressed in lens.

It localises to the cytoplasm. Functionally, adapter protein for the cul3 E3 ubiquitin-protein ligase complex. Involved in late neuronal development and muscle formation. This is BTB/POZ domain-containing protein 6 from Homo sapiens (Human).